The primary structure comprises 389 residues: GTPase Obg (389 aa).

The Obg domain occupies 1-159 (MKFVDEAVIR…RSLKLELMLL (159 aa)). The segment at 122–144 (FHGLGNTRFKSSTNRAPRQKTLG) is disordered. The OBG-type G domain maps to 160-333 (ADVGLLGMPN…LSLKLIDFIE (174 aa)). GTP is bound by residues 166–173 (GMPNAGKS), 191–195 (FTTLV), 213–216 (DIPG), 283–286 (NKTD), and 314–316 (SAY). Positions 173 and 193 each coordinate Mg(2+).

Belongs to the TRAFAC class OBG-HflX-like GTPase superfamily. OBG GTPase family. As to quaternary structure, monomer. Mg(2+) serves as cofactor.

Its subcellular location is the cytoplasm. An essential GTPase which binds GTP, GDP and possibly (p)ppGpp with moderate affinity, with high nucleotide exchange rates and a fairly low GTP hydrolysis rate. Plays a role in control of the cell cycle, stress response, ribosome biogenesis and in those bacteria that undergo differentiation, in morphogenesis control. The polypeptide is GTPase Obg (Shewanella woodyi (strain ATCC 51908 / MS32)).